Here is a 273-residue protein sequence, read N- to C-terminus: Tyrosinase (273 aa).

Positions Met-1 to Gly-18 are cleaved as a signal peptide. Residues Asn-86 and Asn-169 are each glycosylated (N-linked (GlcNAc...) asparagine). Cu cation is bound by residues His-180, His-202, and His-211. Asn-230 is a glycosylation site (N-linked (GlcNAc...) asparagine).

The protein belongs to the tyrosinase family. Cu(2+) is required as a cofactor.

The protein resides in the melanosome membrane. The enzyme catalyses 2 L-dopa + O2 = 2 L-dopaquinone + 2 H2O. The catalysed reaction is L-tyrosine + O2 = L-dopaquinone + H2O. In terms of biological role, this is a copper-containing oxidase that functions in the formation of pigments such as melanins and other polyphenolic compounds. This is Tyrosinase (TYR) from Pelodiscus sinensis (Chinese softshell turtle).